The sequence spans 199 residues: MTNQTEKEQVEQDVSQATELAQEAQEAQTQDVEPELQQNNEIDPLEEAIARVQELEAYIAEADKREQDIQLRARAEVENIRRRAEQDVEKAHKFALEKFSKEMLTVVDNLERGLQALEGVDESVKSGVELTHKGLVSTLNNFGVEAVGVVGEAFNPELHQAISMQPAEGIEANHISVVLQKGYTLHGRVIRPAMVMVAS.

Residues 1 to 10 (MTNQTEKEQV) show a composition bias toward basic and acidic residues. A disordered region spans residues 1–44 (MTNQTEKEQVEQDVSQATELAQEAQEAQTQDVEPELQQNNEIDP). The segment covering 16-30 (QATELAQEAQEAQTQ) has biased composition (low complexity).

The protein belongs to the GrpE family. In terms of assembly, homodimer.

Its subcellular location is the cytoplasm. Participates actively in the response to hyperosmotic and heat shock by preventing the aggregation of stress-denatured proteins, in association with DnaK and GrpE. It is the nucleotide exchange factor for DnaK and may function as a thermosensor. Unfolded proteins bind initially to DnaJ; upon interaction with the DnaJ-bound protein, DnaK hydrolyzes its bound ATP, resulting in the formation of a stable complex. GrpE releases ADP from DnaK; ATP binding to DnaK triggers the release of the substrate protein, thus completing the reaction cycle. Several rounds of ATP-dependent interactions between DnaJ, DnaK and GrpE are required for fully efficient folding. The sequence is that of Protein GrpE from Glaesserella parasuis serovar 5 (strain SH0165) (Haemophilus parasuis).